A 530-amino-acid polypeptide reads, in one-letter code: UDP-glucuronosyltransferase 2B7 (530 aa).

A signal peptide spans 1-17 (MPQKWISALLLLQISFC). Asn316 carries an N-linked (GlcNAc...) asparagine glycan. UDP-alpha-D-glucuronate-binding positions include 374–380 (THGGANG) and Glu400. Residues 496 to 516 (IGFLLACVLAIVLLAVKCCLF) form a helical membrane-spanning segment.

It belongs to the UDP-glycosyltransferase family.

It is found in the endoplasmic reticulum membrane. It catalyses the reaction glucuronate acceptor + UDP-alpha-D-glucuronate = acceptor beta-D-glucuronoside + UDP + H(+). It carries out the reaction 17alpha-estradiol + UDP-alpha-D-glucuronate = 17alpha-estradiol 17-O-(beta-D-glucuronate) + UDP + H(+). The enzyme catalyses 17beta-estradiol + UDP-alpha-D-glucuronate = 17beta-estradiol 17-O-(beta-D-glucuronate) + UDP + H(+). The catalysed reaction is 2-hydroxy-17beta-estradiol + UDP-alpha-D-glucuronate = 2-hydroxy-17beta-estradiol 3-O-(beta-D-glucuronate) + UDP + H(+). It catalyses the reaction 4-hydroxy-17beta-estradiol + UDP-alpha-D-glucuronate = 17beta-estradiol 4-O-(beta-D-glucuronate) + UDP + H(+). It carries out the reaction 4-hydroxyestrone + UDP-alpha-D-glucuronate = estrone 4-O-(beta-D-glucuronate) + UDP + H(+). The enzyme catalyses 16alpha-hydroxyestrone + UDP-alpha-D-glucuronate = 16alpha-hydroxyestrone 16-O-(beta-D-glucuronate) + UDP + H(+). The catalysed reaction is 16alpha,17beta-estriol + UDP-alpha-D-glucuronate = 16alpha,17beta-estriol 16-O-(beta-D-glucuronate) + UDP + H(+). It catalyses the reaction 16beta,17beta-estriol + UDP-alpha-D-glucuronate = 16beta,17beta-estriol 16-O-(beta-D-glucuronate) + UDP + H(+). It carries out the reaction 16alpha,17alpha-estriol + UDP-alpha-D-glucuronate = 16alpha,17alpha-estriol 16-O-(beta-D-glucuronate) + UDP + H(+). The enzyme catalyses 16alpha,17alpha-estriol + UDP-alpha-D-glucuronate = 16alpha,17alpha-estriol 17-O-(beta-D-glucuronate) + UDP + H(+). The catalysed reaction is epitestosterone + UDP-alpha-D-glucuronate = epitestosterone 17-O-(beta-D-glucuronate) + UDP + H(+). It catalyses the reaction hyodeoxycholate + UDP-alpha-D-glucuronate = hyodeoxycholate 6-O-(beta-D-glucuronate) + UDP + H(+). It carries out the reaction hyocholate + UDP-alpha-D-glucuronate = hyocholate 6-O-(beta-D-glucuronate) + UDP + H(+). The enzyme catalyses all-trans-retinoate + UDP-alpha-D-glucuronate = all-trans-retinoyl-1-O-(beta-D-glucuronate) + UDP. The catalysed reaction is all-trans-4-hydroxyretinoate + UDP-alpha-D-glucuronate = all-trans-4-hydroxy-4-O-(beta-D-glucuronide)-retinoate + UDP + H(+). It catalyses the reaction (E)-ferulate + UDP-alpha-D-glucuronate = (E)-ferulic acid beta-D-glucuronate ester + UDP. It carries out the reaction 8-iso-prostaglandin F2alpha + UDP-alpha-D-glucuronate = 8-iso-prostaglandin F2alpha-glucuronide + UDP + H(+). The enzyme catalyses 5-epi-5-F2t-IsoP + UDP-alpha-D-glucuronate = 5-epi-5-F2t-IsoP-glucuronide + UDP + H(+). The catalysed reaction is (5Z,8Z,11Z,14Z)-eicosatetraenoate + UDP-alpha-D-glucuronate = O-[(5Z),(8Z),(11Z),(14Z)-eicosatetraenoyl]-beta-D-glucuronate + UDP. It catalyses the reaction 15-hydroxy-(5Z,8Z,11Z,13E)-eicosatetraenoate + UDP-alpha-D-glucuronate = 15-O-(beta-D-glucuronosyl)-(5Z,8Z,11Z,14Z)-eicosatetraenoate + UDP + H(+). It carries out the reaction 20-hydroxy-(5Z,8Z,11Z,14Z)-eicosatetraenoate + UDP-alpha-D-glucuronate = 20-O-(beta-D-glucuronosyl)-(5Z,8Z,11Z,14Z)-eicosatetraenoate + UDP + H(+). The enzyme catalyses (E)-ferulate + UDP-alpha-D-glucuronate = (E)-4-O-(beta-D-glucuronosyl)-ferulate + UDP + H(+). The catalysed reaction is prostaglandin B1 + UDP-alpha-D-glucuronate = 15-O-(beta-D-glucuronosyl)-prostaglandin B1 + UDP + H(+). It catalyses the reaction mycophenolate + UDP-alpha-D-glucuronate = mycophenolic acid O-acyl-beta-D-glucuronide + UDP. It carries out the reaction losartan + UDP-alpha-D-glucuronate = losartan-2-N-beta-D-glucuronide + UDP. The enzyme catalyses candesartan + UDP-alpha-D-glucuronate = candesartan O-beta-D-glucuronoside + UDP. The catalysed reaction is candesartan + UDP-alpha-D-glucuronate = candesartan-2-N-beta-D-glucuronide + UDP. It catalyses the reaction zolasartan + UDP-alpha-D-glucuronate = zolarsartan O-beta-D-glucuronoside + UDP. Functionally, UDP-glucuronosyltransferase (UGT) that catalyzes phase II biotransformation reactions in which lipophilic substrates are conjugated with glucuronic acid to increase the metabolite's water solubility, thereby facilitating excretion into either the urine or bile. Essential for the elimination and detoxification of drugs, xenobiotics and endogenous compounds. Catalyzes the glucuronidation of endogenous steroid hormones such as androgens (epitestosterone, androsterone) and estrogens (estradiol, epiestradiol, estriol, catechol estrogens). Also regulates the levels of retinoic acid, a major metabolite of vitamin A involved in apoptosis, cellular growth and differentiation, and embryonic development. Contributes to bile acid (BA) detoxification by catalyzing the glucuronidation of BA substrates, which are natural detergents for dietary lipids absorption. Involved in the glucuronidation of arachidonic acid (AA) and AA-derived eicosanoids including 15-HETE, 20-HETE, PGE2, PGB1 and F2-isoprostanes (8-iso-PGF2alpha and 5-epi-5-F2t-IsoP). Involved in the glucuronidation of the phytochemical ferulic acid at the phenolic or the carboxylic acid group. Involved in the glucuronidation of the AGTR1 angiotensin receptor antagonist losartan, caderastan and zolarsatan, drugs which can inhibit the effect of angiotensin II. Also metabolizes mycophenolate, an immunosuppressive agent. The polypeptide is UDP-glucuronosyltransferase 2B7 (Rattus norvegicus (Rat)).